We begin with the raw amino-acid sequence, 293 residues long: Probable endoribonuclease YicC (293 aa).

It belongs to the YicC/YloC family. A divalent metal cation serves as cofactor.

Functionally, negatively modulates sporulation, probably in response to nutrient conditions. Effects expression of sporulation regulator spo0A in an indirect manner, possibly via repression of the sinRR' operon. Its function is as follows. Probably a ssRNA endonuclease. Might contribute to small RNA (sRNA) regulation. The chain is Probable endoribonuclease YicC from Clostridioides difficile (strain 630) (Peptoclostridium difficile).